Consider the following 327-residue polypeptide: DNA-directed RNA polymerase subunit alpha (327 aa).

The interval 1-233 (MVREKVKVST…NLFIPFLHVE (233 aa)) is alpha N-terminal domain (alpha-NTD). The interval 267–327 (LAFQYIFIDQ…KKILDILEKK (61 aa)) is alpha C-terminal domain (alpha-CTD).

It belongs to the RNA polymerase alpha chain family. As to quaternary structure, in plastids the minimal PEP RNA polymerase catalytic core is composed of four subunits: alpha, beta, beta', and beta''. When a (nuclear-encoded) sigma factor is associated with the core the holoenzyme is formed, which can initiate transcription.

The protein localises to the plastid. The protein resides in the chloroplast. It catalyses the reaction RNA(n) + a ribonucleoside 5'-triphosphate = RNA(n+1) + diphosphate. In terms of biological role, DNA-dependent RNA polymerase catalyzes the transcription of DNA into RNA using the four ribonucleoside triphosphates as substrates. This chain is DNA-directed RNA polymerase subunit alpha, found in Crucihimalaya wallichii (Rock-cress).